We begin with the raw amino-acid sequence, 516 residues long: Thioredoxin reductase 2, mitochondrial (516 aa).

62–79 (DYVKPTPVGTKWGIGGTC) serves as a coordination point for FAD. Residues Cys79 and Cys84 are joined by a disulfide bond. His489 serves as the catalytic Proton acceptor.

Belongs to the class-I pyridine nucleotide-disulfide oxidoreductase family. As to quaternary structure, homodimer. FAD is required as a cofactor.

It localises to the mitochondrion. It carries out the reaction [thioredoxin]-dithiol + NADP(+) = [thioredoxin]-disulfide + NADPH + H(+). Thioredoxin system is a major player in glutathione metabolism, due to the demonstrated absence of a glutathione reductase. Functionally interacts with the Sod/Cat reactive oxidation species (ROS) defense system and thereby has a role in preadult development and life span. Lack of a glutathione reductase suggests antioxidant defense in Drosophila, and probably in related insects, differs fundamentally from that in other organisms. This is Thioredoxin reductase 2, mitochondrial from Drosophila melanogaster (Fruit fly).